The following is a 185-amino-acid chain: Pericyclase pydY (185 aa).

This sequence belongs to the pericyclase pydY family.

Its pathway is mycotoxin biosynthesis. Its function is as follows. Pericyclase; part of the gene cluster that mediates the biosynthesis of pyrrocidines, fungal natural products containing a macrocyclic para-cyclophane connected to a decahydrofluorene ring system that show potent antibiotic activities toward Gram-negative bacteria. Within the pathway, pydY is involved in the late Diels-Alder cycloaddition step that leads to the formation of the decahydrofluorene core. The pathway begins with the PKS-NRPS pydA which, with the help of the trans-enoyl reductase pydC, synthesizes the polyketide-tyrosyl acyl thioester product which can be reductively off-loaded by the terminal reductase (R) domain in pydA. The alpha/beta hydrolase pydG is then required to catalyze the subsequent Knoevenagel condensation that affords the 3-pyrrolin-2-one ring, whereas the four proteins pydB, pydE, pydX and pydZ then function synergistically to form the cyclophane. PydB and the membrane-bound pydX and pydZ are lipid-binding proteins that can sequester and mold the pdyG product into the inverse S-shape. Binding of the medium chain reductase pydE to the complex would trigger the cascade oxidative cyclization. PydY is involved in the Diels-Alder cycloaddition that forms the decahydrofluorene core. Additional non-enzymatic hydroxylation yields pyrrocidine A2 which can be further reduced into pyrrocidine B by an endogenous reductase. In Acremonium sp, this protein is Pericyclase pydY.